A 113-amino-acid polypeptide reads, in one-letter code: Hydrogenase maturation factor HypA (113 aa).

His-2 serves as a coordination point for Ni(2+). Cys-73, Cys-76, Cys-89, and Cys-92 together coordinate Zn(2+).

The protein belongs to the HypA/HybF family.

Its function is as follows. Involved in the maturation of [NiFe] hydrogenases. Required for nickel insertion into the metal center of the hydrogenase. This chain is Hydrogenase maturation factor HypA, found in Rhodobacter capsulatus (Rhodopseudomonas capsulata).